The primary structure comprises 450 residues: Glucose-6-phosphate isomerase (450 aa).

Residue glutamate 291 is the Proton donor of the active site. Active-site residues include histidine 312 and lysine 426.

Belongs to the GPI family.

It localises to the cytoplasm. The enzyme catalyses alpha-D-glucose 6-phosphate = beta-D-fructose 6-phosphate. Its pathway is carbohydrate biosynthesis; gluconeogenesis. It functions in the pathway carbohydrate degradation; glycolysis; D-glyceraldehyde 3-phosphate and glycerone phosphate from D-glucose: step 2/4. In terms of biological role, catalyzes the reversible isomerization of glucose-6-phosphate to fructose-6-phosphate. In Clostridium perfringens (strain SM101 / Type A), this protein is Glucose-6-phosphate isomerase.